Here is a 352-residue protein sequence, read N- to C-terminus: Putative [LysW]-L-2-aminoadipate/[LysW]-L-glutamate phosphate reductase (352 aa).

Residues Ser10–Thr13 and Ser34–Lys36 each bind NADP(+). Cys151 is an active-site residue. Residue Asn319 participates in NADP(+) binding.

The protein belongs to the NAGSA dehydrogenase family. Type 1 subfamily. LysY sub-subfamily.

It localises to the cytoplasm. The enzyme catalyses [amino-group carrier protein]-C-terminal-N-(1-carboxy-5-oxopentan-1-yl)-L-glutamine + phosphate + NADP(+) = [amino-group carrier protein]-C-terminal-N-(1-carboxy-5-phosphooxy-5-oxopentan-1-yl)-L-glutamine + NADPH + H(+). It catalyses the reaction [amino-group carrier protein]-C-terminal-gamma-(L-glutamyl-5-semialdehyde)-L-glutamate + phosphate + NADP(+) = [amino-group carrier protein]-C-terminal-gamma-(5-phospho-L-glutamyl)-L-glutamate + NADPH + H(+). The protein operates within amino-acid biosynthesis; L-lysine biosynthesis via AAA pathway; L-lysine from L-alpha-aminoadipate (Thermus route): step 3/5. It functions in the pathway amino-acid biosynthesis; L-arginine biosynthesis. In terms of biological role, involved in both the arginine and lysine biosynthetic pathways. This is Putative [LysW]-L-2-aminoadipate/[LysW]-L-glutamate phosphate reductase from Pyrobaculum neutrophilum (strain DSM 2338 / JCM 9278 / NBRC 100436 / V24Sta) (Thermoproteus neutrophilus).